We begin with the raw amino-acid sequence, 527 residues long: N-acetylglutamate synthase, mitochondrial (527 aa).

The N-terminal 18 residues, 1 to 18 (MATAWVATALRSAAAARR), are a transit peptide targeting the mitochondrion. Residues 14-91 (AAARRLRSPG…PLESPAPPAG (78 aa)) form a disordered region. The tract at residues 19–369 (LRSPGGPGGS…CGTLFKNAER (351 aa)) is amino-acid kinase domain (AAK). A compositionally biased stretch (basic and acidic residues) spans 54–63 (AHAEDAEGAK). Residues 77–89 (TPLPTPLESPAPP) show a composition bias toward pro residues. Positions 368-519 (ERMLRVRNLD…HAKGLPDSFC (152 aa)) constitute an N-acetyltransferase domain. Residues lysine 394, lysine 437, and 467 to 472 (RSRVTN) contribute to the substrate site.

It belongs to the acetyltransferase family. As to quaternary structure, homodimer. Homotetramer. Post-translationally, probably processed by mitochondrial processing peptidase (MPP). The long form has not yet been isolated. As to expression, highly expressed in the liver and small intestine. Weakly expressed in the kidney, spleen and testis.

Its subcellular location is the mitochondrion matrix. The enzyme catalyses L-glutamate + acetyl-CoA = N-acetyl-L-glutamate + CoA + H(+). It participates in amino-acid biosynthesis; L-arginine biosynthesis; N(2)-acetyl-L-ornithine from L-glutamate: step 1/4. Its activity is regulated as follows. Increased by L-arginine. Plays a role in the regulation of ureagenesis by producing the essential cofactor N-acetylglutamate (NAG), thus modulating carbamoylphosphate synthase I (CPS1) activity. This Mus musculus (Mouse) protein is N-acetylglutamate synthase, mitochondrial (Nags).